We begin with the raw amino-acid sequence, 204 residues long: Protein GrpE (204 aa).

The segment covering 1-12 has biased composition (basic and acidic residues); sequence MSNEEQAQKDDA. A disordered region spans residues 1-32; sequence MSNEEQAQKDDAQPVNEAAIDATAEQADAEVE. The span at 17–26 shows a compositional bias: low complexity; it reads EAAIDATAEQ.

The protein belongs to the GrpE family. As to quaternary structure, homodimer.

Its subcellular location is the cytoplasm. Functionally, participates actively in the response to hyperosmotic and heat shock by preventing the aggregation of stress-denatured proteins, in association with DnaK and GrpE. It is the nucleotide exchange factor for DnaK and may function as a thermosensor. Unfolded proteins bind initially to DnaJ; upon interaction with the DnaJ-bound protein, DnaK hydrolyzes its bound ATP, resulting in the formation of a stable complex. GrpE releases ADP from DnaK; ATP binding to DnaK triggers the release of the substrate protein, thus completing the reaction cycle. Several rounds of ATP-dependent interactions between DnaJ, DnaK and GrpE are required for fully efficient folding. This chain is Protein GrpE, found in Pseudoalteromonas atlantica (strain T6c / ATCC BAA-1087).